The chain runs to 172 residues: Protein-export protein SecB (172 aa).

Belongs to the SecB family. Homotetramer, a dimer of dimers. One homotetramer interacts with 1 SecA dimer.

Its subcellular location is the cytoplasm. In terms of biological role, one of the proteins required for the normal export of preproteins out of the cell cytoplasm. It is a molecular chaperone that binds to a subset of precursor proteins, maintaining them in a translocation-competent state. It also specifically binds to its receptor SecA. This chain is Protein-export protein SecB, found in Ralstonia pickettii (strain 12J).